Reading from the N-terminus, the 376-residue chain is Non-structural protein NS2 (376 aa).

A compositionally biased stretch (basic and acidic residues) spans 163 to 188 (EEREKGAVEQPHKPAFKTERGMNRPD). Residues 163-201 (EEREKGAVEQPHKPAFKTERGMNRPDSDEDQNPAGGVVN) form a disordered region.

This sequence belongs to the orbivirus non-structural protein NS2 family.

Functionally, single-stranded RNA-binding protein. This Antilocapra americana (Pronghorn) protein is Non-structural protein NS2 (Segment-8).